A 150-amino-acid polypeptide reads, in one-letter code: Large ribosomal subunit protein bL9 (150 aa).

This sequence belongs to the bacterial ribosomal protein bL9 family.

In terms of biological role, binds to the 23S rRNA. This chain is Large ribosomal subunit protein bL9, found in Halorhodospira halophila (strain DSM 244 / SL1) (Ectothiorhodospira halophila (strain DSM 244 / SL1)).